Here is a 445-residue protein sequence, read N- to C-terminus: Probable protein phosphatase 2C 14 (445 aa).

One can recognise a PPM-type phosphatase domain in the interval 120–440 (GFGVVSRNGK…DDITVVIIDL (321 aa)). Residues aspartate 156, glycine 157, and aspartate 318 each contribute to the Mn(2+) site. The segment at 384-404 (NSENESPSLNREIGSSPSKSP) is disordered. The span at 390 to 404 (PSLNREIGSSPSKSP) shows a compositional bias: polar residues. Aspartate 431 is a Mn(2+) binding site.

It belongs to the PP2C family. Mg(2+) serves as cofactor. The cofactor is Mn(2+).

It carries out the reaction O-phospho-L-seryl-[protein] + H2O = L-seryl-[protein] + phosphate. The enzyme catalyses O-phospho-L-threonyl-[protein] + H2O = L-threonyl-[protein] + phosphate. The protein is Probable protein phosphatase 2C 14 of Arabidopsis thaliana (Mouse-ear cress).